A 362-amino-acid chain; its full sequence is Phosphoserine aminotransferase (362 aa).

Arg-43 serves as a coordination point for L-glutamate. Pyridoxal 5'-phosphate-binding positions include 77-78 (AR), Trp-103, Thr-153, Asp-173, and Gln-196. An N6-(pyridoxal phosphate)lysine modification is found at Lys-197.

The protein belongs to the class-V pyridoxal-phosphate-dependent aminotransferase family. SerC subfamily. Homodimer. Pyridoxal 5'-phosphate is required as a cofactor.

It is found in the cytoplasm. The catalysed reaction is O-phospho-L-serine + 2-oxoglutarate = 3-phosphooxypyruvate + L-glutamate. It carries out the reaction 4-(phosphooxy)-L-threonine + 2-oxoglutarate = (R)-3-hydroxy-2-oxo-4-phosphooxybutanoate + L-glutamate. Its pathway is amino-acid biosynthesis; L-serine biosynthesis; L-serine from 3-phospho-D-glycerate: step 2/3. The protein operates within cofactor biosynthesis; pyridoxine 5'-phosphate biosynthesis; pyridoxine 5'-phosphate from D-erythrose 4-phosphate: step 3/5. Its function is as follows. Catalyzes the reversible conversion of 3-phosphohydroxypyruvate to phosphoserine and of 3-hydroxy-2-oxo-4-phosphonooxybutanoate to phosphohydroxythreonine. This Legionella pneumophila (strain Paris) protein is Phosphoserine aminotransferase.